A 295-amino-acid polypeptide reads, in one-letter code: Protoheme IX farnesyltransferase (295 aa).

9 consecutive transmembrane segments (helical) span residues 24–43, 47–69, 94–114, 117–137, 144–164, 171–191, 216–236, 241–261, and 272–292; these read IMYL…PGSI, LALI…NMWY, SALE…AIAV, ISAI…TIWL, NIVI…AVVT, GFVL…ALSL, KYIL…ALFL, FYLG…VSIM, and MFSY…LCSI.

Belongs to the UbiA prenyltransferase family. Protoheme IX farnesyltransferase subfamily.

It localises to the cell membrane. It carries out the reaction heme b + (2E,6E)-farnesyl diphosphate + H2O = Fe(II)-heme o + diphosphate. The protein operates within porphyrin-containing compound metabolism; heme O biosynthesis; heme O from protoheme: step 1/1. Its function is as follows. Converts heme B (protoheme IX) to heme O by substitution of the vinyl group on carbon 2 of heme B porphyrin ring with a hydroxyethyl farnesyl side group. This chain is Protoheme IX farnesyltransferase, found in Wolbachia sp. subsp. Brugia malayi (strain TRS).